Here is a 321-residue protein sequence, read N- to C-terminus: Beta-1,3-N-acetylglucosaminyltransferase manic fringe (321 aa).

The Cytoplasmic segment spans residues 1 to 7 (MQCRLPR). The helical; Signal-anchor for type II membrane protein transmembrane segment at 8–27 (GLAGALLTLLCMGLLCLRYH) threads the bilayer. The Lumenal portion of the chain corresponds to 28 to 321 (LNLSPQRVQG…TPWCPQLGAR (294 aa)). Arg70 contributes to the substrate binding site. N-linked (GlcNAc...) asparagine glycosylation is present at Asn109. 2 disulfides stabilise this stretch: Cys110/Cys121 and Cys139/Cys202. Residue Asp143 participates in substrate binding. Asp144 is a binding site for Mn(2+). N-linked (GlcNAc...) asparagine glycosylation is present at Asn185. Asp232 is a catalytic residue. His256 lines the Mn(2+) pocket. Cys306 and Cys315 are joined by a disulfide.

It belongs to the glycosyltransferase 31 family. The cofactor is Mn(2+).

The protein resides in the golgi apparatus membrane. The enzyme catalyses 3-O-(alpha-L-fucosyl)-L-threonyl-[EGF-like domain protein] + UDP-N-acetyl-alpha-D-glucosamine = 3-O-(N-acetyl-beta-D-glucosaminyl-(1-&gt;3)-alpha-L-fucosyl)-L-threonyl-[EGF-like domain protein] + UDP + H(+). The catalysed reaction is 3-O-(alpha-L-fucosyl)-L-seryl-[EGF-like domain protein] + UDP-N-acetyl-alpha-D-glucosamine = 3-O-(N-acetyl-beta-D-glucosaminyl-(1-&gt;3)-alpha-L-fucosyl)-L-seryl-[EGF-like domain protein] + UDP + H(+). Its function is as follows. Glycosyltransferase that initiates the elongation of O-linked fucose residues attached to EGF-like repeats in the extracellular domain of Notch molecules. Modulates NOTCH1 activity by modifying O-fucose residues at specific EGF-like domains resulting in inhibition of NOTCH1 activation by JAG1 and enhancement of NOTCH1 activation by DLL1 via an increase in its binding to DLL1. The chain is Beta-1,3-N-acetylglucosaminyltransferase manic fringe from Homo sapiens (Human).